Consider the following 127-residue polypeptide: Fumarate reductase subunit C (127 aa).

A run of 3 helical transmembrane segments spans residues 30–50 (ATVL…GSLV), 67–87 (LVIA…QTFF), and 107–127 (IIVL…LIVV).

It belongs to the FrdC family. In terms of assembly, part of an enzyme complex containing four subunits: a flavoprotein (FrdA), an iron-sulfur protein (FrdB), and two hydrophobic anchor proteins (FrdC and FrdD).

It localises to the cell inner membrane. Functionally, anchors the catalytic components of the fumarate reductase complex to the cell membrane, binds quinones. In Vibrio cholerae serotype O1 (strain ATCC 39541 / Classical Ogawa 395 / O395), this protein is Fumarate reductase subunit C.